Here is a 924-residue protein sequence, read N- to C-terminus: Exocyst complex component 2 (924 aa).

The region spanning 8–93 is the IPT/TIG domain; that stretch reads PLVTGISPNE…GTSTVSFKLL (86 aa). Residues 240 to 260 adopt a coiled-coil conformation; sequence QKLENVLNRASNTADTLFQEV. 3 positions are modified to phosphoserine: Ser431, Ser432, and Ser435. Thr440 carries the phosphothreonine modification. Lys454 bears the N6-acetyllysine mark.

The protein belongs to the SEC5 family. The exocyst complex is composed of EXOC1, EXOC2, EXOC3, EXOC4, EXOC5, EXOC6, EXOC7 and EXOC8. Interacts with EXOC3L1. Interacts with GNEFR/DELGEF; this interaction occurs only in the presence of magnesium or manganese and is stimulated by dCTP or GTP. Interacts with RALA and RALB. Interacts with ARL13B; regulates ARL13B localization to the cilium membrane.

Its subcellular location is the midbody. It localises to the midbody ring. Functionally, component of the exocyst complex involved in the docking of exocytic vesicles with fusion sites on the plasma membrane. The sequence is that of Exocyst complex component 2 (Exoc2) from Mus musculus (Mouse).